Here is a 452-residue protein sequence, read N- to C-terminus: Retinoid-inducible serine carboxypeptidase (452 aa).

An N-terminal signal peptide occupies residues 1–26 (MELALRRSPVPRWLLLLPLLLGLNAG). Asn64 and Asn126 each carry an N-linked (GlcNAc...) asparagine glycan. Ser167 is an active-site residue. An N-linked (GlcNAc...) asparagine glycan is attached at Asn362. Residues Asp371 and His431 contribute to the active site.

Belongs to the peptidase S10 family.

It localises to the secreted. In terms of biological role, may be involved in vascular wall and kidney homeostasis. This Homo sapiens (Human) protein is Retinoid-inducible serine carboxypeptidase (SCPEP1).